Consider the following 445-residue polypeptide: UPF0210 protein STK_02450 (445 aa).

It belongs to the UPF0210 family.

This is UPF0210 protein STK_02450 from Sulfurisphaera tokodaii (strain DSM 16993 / JCM 10545 / NBRC 100140 / 7) (Sulfolobus tokodaii).